The sequence spans 601 residues: Glutathione-regulated potassium-efflux system protein KefB (601 aa).

A run of 13 helical transmembrane segments spans residues 5-25 (DLLLAGILFLFAAVVAVPIAA), 29-49 (IGAVLGYLLAGIAIGPWGLGF), 55-75 (EILHFSELGVVFLMFLIGLEL), 87-107 (IFGIGAAQVLLSAVVLAGLLM), 115-135 (AAVVGGIGLAMSSTAMALQLM), 152-172 (VLLFQDLAVIPALAMVPLLAG), 181-201 (LKIGMKVLAFAVMLVGGRYLL), 207-227 (FIAGSGVREVFTAAALLLVLG), 230-250 (LFMDLLGLSMALGTFIAGILL), 268-288 (GLLLGLFFISVGMALNLGVLY), 291-311 (ILWVVMSVVVLVSVKMAVLYG), 324-344 (LPFAGVLSQGGEFAFVLFSSA), and 356-376 (ALLLVTVTLSMMTTPLVMKGI). The region spanning 400 to 519 (KPQVIIVGFG…AGVKQFSRET (120 aa)) is the RCK N-terminal domain.

Belongs to the monovalent cation:proton antiporter 2 (CPA2) transporter (TC 2.A.37) family. KefB subfamily. Interacts with the regulatory subunit KefG.

It localises to the cell inner membrane. Functionally, pore-forming subunit of a potassium efflux system that confers protection against electrophiles. Catalyzes K(+)/H(+) antiport. The sequence is that of Glutathione-regulated potassium-efflux system protein KefB from Cronobacter sakazakii (strain ATCC BAA-894) (Enterobacter sakazakii).